The chain runs to 377 residues: MSVLFTILLMAVIGGFIGAMTNYIAIRMLFRPYKALYLFNKRVPFTPGLIPKRRDELAEHIGKVVVSHLLTEDAIRARLLEENLQKEITETVAKMFHEKMQLETTPNELLHQLGYENAEGRSISWLETVLEKEINHFLTIKKTSQMNELIPVMLEKELETKLPHVTERITSKLTLFIASEEGKLQIKMMLQKFFEEHGKMGSMARMFINVESFSEKIQQEGAKLINQEDTKNLINQLLTTEWKNFEAKELQELIPTEKQAHLAEQLTSEIIQAFPHDKIFNQPVQVILRDYEVMIKSKIIPFAVERMLDFVATHSADIVERMDLAKLVETQIATFSLQEIEKLVVEISGRELKMITYLGGILGGFIGVIQGILAIWI.

A run of 2 helical transmembrane segments spans residues 1-21 and 357-377; these read MSVL…GAMT and YLGG…AIWI.

Belongs to the UPF0754 family.

The protein localises to the cell membrane. The polypeptide is UPF0754 membrane protein lwe2241 (Listeria welshimeri serovar 6b (strain ATCC 35897 / DSM 20650 / CCUG 15529 / CIP 8149 / NCTC 11857 / SLCC 5334 / V8)).